The sequence spans 369 residues: MRLLDTATPSVSSIPIAPHATQPTETAMTITAQEALTRCIEHREIFHDEMLHLMRQIMQAQISPVMAAAILTGLRVKKETIGEISAAAQVMREFANKVEVTDRENFVDIVGTGGDGSHTFNISTASMFVAAAAGAKIAKHGNRGVSSKSGSADVLEALGVNIMLTPEQVGQCIAQTGIGFMFAPTHHPAMKNVAPIRKEMGVRTIFNILGPLTNPADAPNILMGVFHPDLVGIQVRVMQRLGAKHALVVYGKDGMDEVSLGAATLVGELKDGEVREYEIHPEDFGLSMISNRGLKVADAVESKAMLLEALGNVPGTPREIVSLNAGTALYAANVADSIEDGIRRAREAIASGAAREKLDHFVRATQQFK.

Residues glycine 111, 114 to 115, threonine 119, 121 to 124, 139 to 147, and serine 151 contribute to the 5-phospho-alpha-D-ribose 1-diphosphate site; these read GD, NIST, and KHGNRGVSS. An anthranilate-binding site is contributed by glycine 111. Serine 123 contributes to the Mg(2+) binding site. Asparagine 142 is an anthranilate binding site. An anthranilate-binding site is contributed by arginine 197. 2 residues coordinate Mg(2+): aspartate 256 and glutamate 257.

This sequence belongs to the anthranilate phosphoribosyltransferase family. Homodimer. Mg(2+) serves as cofactor.

It catalyses the reaction N-(5-phospho-beta-D-ribosyl)anthranilate + diphosphate = 5-phospho-alpha-D-ribose 1-diphosphate + anthranilate. The protein operates within amino-acid biosynthesis; L-tryptophan biosynthesis; L-tryptophan from chorismate: step 2/5. Catalyzes the transfer of the phosphoribosyl group of 5-phosphorylribose-1-pyrophosphate (PRPP) to anthranilate to yield N-(5'-phosphoribosyl)-anthranilate (PRA). The sequence is that of Anthranilate phosphoribosyltransferase from Cupriavidus pinatubonensis (strain JMP 134 / LMG 1197) (Cupriavidus necator (strain JMP 134)).